The chain runs to 583 residues: Ribosomal lysine N-methyltransferase 1 (583 aa).

Positions 22–274 (EELKFLYTDL…QSRELSNNYG (253 aa)) constitute an SET domain. Tyr-273 serves as a coordination point for S-adenosyl-L-methionine. Coiled-coil stretches lie at residues 378-407 (KAEE…KLNS) and 433-459 (KGQK…ENKH).

This sequence belongs to the class V-like SAM-binding methyltransferase superfamily. RKM1 family.

The protein localises to the cytoplasm. It localises to the nucleus. Functionally, S-adenosyl-L-methionine-dependent protein-lysine N-methyltransferase that monomethylates ribosomal protein S18 (RPS18A and RPS18B) at 'Lys-48' and dimethylates ribosomal protein L23 (RPL23A and RPL23B) at 'Lys-106' and 'Lys-110'. This is Ribosomal lysine N-methyltransferase 1 from Saccharomyces cerevisiae (strain ATCC 204508 / S288c) (Baker's yeast).